The primary structure comprises 430 residues: Cholecystokinin receptor type A (430 aa).

The Extracellular portion of the chain corresponds to 1 to 41 (MDVVDSLFVNGSNITSACELGFENETLFCLDRPRPSKEWQP). N-linked (GlcNAc...) asparagine glycosylation is found at asparagine 10, asparagine 13, and asparagine 24. Cysteine 18 and cysteine 29 are joined by a disulfide. Residues 42 to 67 (AVQILLYSLIFLLSVLGNTLVITVLI) form a helical membrane-spanning segment. Residues 68–77 (RNKRMRTVTN) lie on the Cytoplasmic side of the membrane. Residues 78 to 104 (IFLLSLAVSDLMLCLFCMPFNLIPSLL) traverse the membrane as a helical segment. Residues 105-115 (KDFIFGSAVCK) lie on the Extracellular side of the membrane. Cysteine 114 and cysteine 196 are joined by a disulfide. The chain crosses the membrane as a helical span at residues 116-137 (TTTYFMGTSVSVSTFNLVAISL). The Cytoplasmic portion of the chain corresponds to 138–157 (ERYGAICKPLQSRVWQTKSH). Residues 158–178 (ALKVIAATWCLSFTIMTPYPI) form a helical membrane-spanning segment. The Extracellular segment spans residues 179 to 210 (YSNLVPFTKNNNQTGNMCRFLLPNDVMQQTWH). The N-linked (GlcNAc...) asparagine glycan is linked to asparagine 190. A helical transmembrane segment spans residues 211–234 (TFLLLILFLIPGIVMMVAYGLISL). The Cytoplasmic portion of the chain corresponds to 235 to 315 (ELYQGIKFDA…NLMAKKRVIR (81 aa)). The chain crosses the membrane as a helical span at residues 316-336 (MLIVIVVLFFLCWMPIFSANA). Over 337 to 351 (WRAYDTVSAERHLSG) the chain is Extracellular. The helical transmembrane segment at 352–375 (TPISFILLLSYTSSCVNPIIYCFM) threads the bilayer. Topologically, residues 376-430 (NKRFRLGFMATFPCCPNPGTPGVRGEMGEEEEGRTTGASLSRYSYSHMSTSAPPP) are cytoplasmic. Cysteine 389 is lipidated: S-palmitoyl cysteine. The tract at residues 396–430 (PGVRGEMGEEEEGRTTGASLSRYSYSHMSTSAPPP) is disordered. Residues 413–430 (ASLSRYSYSHMSTSAPPP) are compositionally biased toward polar residues.

Belongs to the G-protein coupled receptor 1 family.

Its subcellular location is the cell membrane. Receptor for cholecystokinin. Mediates pancreatic growth and enzyme secretion, smooth muscle contraction of the gall bladder and stomach. Has a 1000-fold higher affinity for CCK rather than for gastrin. It modulates feeding and dopamine-induced behavior in the central and peripheral nervous system. This receptor mediates its action by association with G proteins that activate a phosphatidylinositol-calcium second messenger system. The sequence is that of Cholecystokinin receptor type A (CCKAR) from Cavia porcellus (Guinea pig).